A 1486-amino-acid polypeptide reads, in one-letter code: Homeobox protein cut-like 2 (1486 aa).

Positions 114-167 (DRLQPPSFDPSGQPRRDLHTSWKRNPELLSPKEQREGTSPAGPTLTEGSRLPGI) are disordered. The span at 127-149 (PRRDLHTSWKRNPELLSPKEQRE) shows a compositional bias: basic and acidic residues. Position 143 is a phosphoserine (Ser143). Positions 195–374 (TLAARLGEAE…IKTELSILKA (180 aa)) form a coiled coil. Disordered stretches follow at residues 415 to 481 (LLAS…LSPF), 517 to 549 (PTAPATPAPGPEPLGGPEPADGGGGGAAGPGAE), 661 to 690 (EIESQKGGEPKTSVAPLSIANGTTPASTSE), 716 to 758 (VAPR…AQAP), 800 to 858 (YASV…EGAT), and 964 to 1032 (GQAV…SGSQ). A compositionally biased stretch (acidic residues) spans 419-428 (PEEDPSEDDS). Residues 443–460 (QQLPPPPGPEDPLSPSPG) are compositionally biased toward pro residues. The segment covering 461–470 (QPLLGPSLGP) has biased composition (low complexity). Over residues 517 to 532 (PTAPATPAPGPEPLGG) the composition is skewed to pro residues. Positions 544-631 (AGPGAEEEQL…VLALRTIQVR (88 aa)) form a DNA-binding region, CUT 1. Over residues 680 to 690 (ANGTTPASTSE) the composition is skewed to polar residues. The stretch at 690-717 (EDAIKSILEQARREMQAQQQALLEMEVA) forms a coiled coil. A compositionally biased stretch (low complexity) spans 802 to 816 (SVSPSLSSSSSSGYS). Residues 834 to 844 (PEDEAAAGAED) show a composition bias toward acidic residues. A compositionally biased stretch (basic and acidic residues) spans 845-854 (EPPRTGELKA). Positions 887–974 (QYELYMYREV…QAVGQQPGAS (88 aa)) form a DNA-binding region, CUT 2. Positions 967–976 (VGQQPGASQA) are enriched in polar residues. Low complexity predominate over residues 1017–1031 (GRSSSSLSGKMYSGS). The segment at residues 1038 to 1125 (QEIVAMSPEL…VEKLRDMKKL (88 aa)) is a DNA-binding region (CUT 3). Positions 1168 to 1227 (IKKPRVVLAPEEKEALRKAYQLEPYPSQQTIELLSFQLNLKTNTVINWFHNYRSRMRREM) form a DNA-binding region, homeobox. Residues 1231–1453 (GTQDEPDLDP…ALHPSAKVNP (223 aa)) form a disordered region. Basic and acidic residues predominate over residues 1266-1276 (EDQKPTVKELE). A compositionally biased stretch (polar residues) spans 1283 to 1293 (ENSTPLTTQDK). The segment covering 1320–1334 (ELDKGQGPPKEEHPD) has biased composition (basic and acidic residues). Polar residues predominate over residues 1381-1401 (KSASESSRCSLEVSLNSPSAA). Residues 1402–1420 (SSPGLMMSVSPVPSSSAPI) show a composition bias toward low complexity. Residues 1421-1431 (SPSPPGAPPAK) show a composition bias toward pro residues.

This sequence belongs to the CUT homeobox family.

It localises to the nucleus. Its function is as follows. Transcription factor involved in the control of neuronal proliferation and differentiation in the brain. Regulates dendrite development and branching, dendritic spine formation, and synaptogenesis in cortical layers II-III. Binds to DNA in a sequence-specific manner. The chain is Homeobox protein cut-like 2 (CUX2) from Homo sapiens (Human).